The primary structure comprises 194 residues: Large ribosomal subunit protein eL15 (194 aa).

Residues 164–194 (SAGKKGRGLRNKGKGAEKIRPSIRANEGKGK) are disordered. Over residues 167-176 (KKGRGLRNKG) the composition is skewed to basic residues. The segment covering 177–194 (KGAEKIRPSIRANEGKGK) has biased composition (basic and acidic residues).

It belongs to the eukaryotic ribosomal protein eL15 family.

The chain is Large ribosomal subunit protein eL15 (rpl15e) from Pyrococcus abyssi (strain GE5 / Orsay).